A 201-amino-acid polypeptide reads, in one-letter code: Retinol-binding protein 4 (201 aa).

A signal peptide spans 1–18 (MEWVWALVLLAALGGGSA). 3 disulfides stabilise this stretch: cysteine 22–cysteine 178, cysteine 88–cysteine 192, and cysteine 138–cysteine 147. Glutamine 116 serves as a coordination point for substrate. Arginine 139 bears the Omega-N-methylarginine mark.

This sequence belongs to the calycin superfamily. Lipocalin family. In terms of assembly, interacts with TTR. Interaction with TTR prevents its loss by filtration through the kidney glomeruli. Interacts with STRA6.

The protein localises to the secreted. Functionally, retinol-binding protein that mediates retinol transport in blood plasma. Delivers retinol from the liver stores to the peripheral tissues. Transfers the bound all-trans retinol to STRA6, that then facilitates retinol transport across the cell membrane. This chain is Retinol-binding protein 4 (Rbp4), found in Mus musculus (Mouse).